The chain runs to 355 residues: Vacuolar protein sorting-associated protein 37C (355 aa).

Ser29 bears the Phosphoserine mark. Residues 78-167 enclose the VPS37 C-terminal domain; that stretch reads VERCQEQKAK…RKPRASQELA (90 aa). Residues 159–355 are disordered; the sequence is KPRASQELAG…PPPGPAWPGY (197 aa). 2 stretches are compositionally biased toward pro residues: residues 170-186 and 194-214; these read APPP…PQGT and PQPP…PSLP. The segment covering 291–304 has biased composition (low complexity); that stretch reads APSPGYPQQSPYPA. Positions 321 to 355 are enriched in pro residues; sequence PGQPQPSVPLQPPYPPGPAPPYGFPPPPGPAWPGY.

The protein belongs to the VPS37 family. Component of the ESCRT-I complex (endosomal sorting complex required for transport I) which consists of TSG101, VPS28, a VPS37 protein (VPS37A to -D) and MVB12A or MVB12B in a 1:1:1:1 stoichiometry. Interacts with TSG101, VPS28, MVB12A and MVB12B. Component of the ESCRT-I complex (endosomal sorting complex required for transport I) which consists of TSG101, VPS28, a VPS37 protein (VPS37A to -D) and UBAP1 in a 1:1:1:1 stoichiometry. Interacts with HGS and STAM2. Interacts with CEP55. Post-translationally, phosphorylated by TBK1.

It is found in the late endosome membrane. Functionally, component of the ESCRT-I complex, a regulator of vesicular trafficking process. Required for the sorting of endocytic ubiquitinated cargos into multivesicular bodies. May be involved in cell growth and differentiation. This chain is Vacuolar protein sorting-associated protein 37C (VPS37C), found in Homo sapiens (Human).